The sequence spans 199 residues: Probable GTP-binding protein EngB (199 aa).

An EngB-type G domain is found at 21 to 195 (IYTEIAFLGR…EQKIILESLG (175 aa)). Residues 29 to 36 (GRSNVGKS), 56 to 60 (GKTQL), 81 to 84 (DLPG), 151 to 154 (TKAD), and 174 to 176 (VSN) contribute to the GTP site. The Mg(2+) site is built by serine 36 and threonine 58.

It belongs to the TRAFAC class TrmE-Era-EngA-EngB-Septin-like GTPase superfamily. EngB GTPase family. Mg(2+) serves as cofactor.

Functionally, necessary for normal cell division and for the maintenance of normal septation. In Campylobacter lari (strain RM2100 / D67 / ATCC BAA-1060), this protein is Probable GTP-binding protein EngB.